The sequence spans 101 residues: MLSLAHYLVLGAILFAISIVGIFLNRRNVIIILMAIELMLLAVNTNFVAFSHYLGDVHGQIFVFFVLTVAAAEAAIGLAILVTLFRSLDTINVEDLDQLKG.

A run of 3 helical transmembrane segments spans residues 4-24 (LAHYLVLGAILFAISIVGIFL), 30-50 (IIILMAIELMLLAVNTNFVAF), and 61-81 (IFVFFVLTVAAAEAAIGLAIL).

The protein belongs to the complex I subunit 4L family. NDH-1 is composed of 14 different subunits. Subunits NuoA, H, J, K, L, M, N constitute the membrane sector of the complex.

Its subcellular location is the cell inner membrane. It catalyses the reaction a quinone + NADH + 5 H(+)(in) = a quinol + NAD(+) + 4 H(+)(out). Its function is as follows. NDH-1 shuttles electrons from NADH, via FMN and iron-sulfur (Fe-S) centers, to quinones in the respiratory chain. The immediate electron acceptor for the enzyme in this species is believed to be ubiquinone. Couples the redox reaction to proton translocation (for every two electrons transferred, four hydrogen ions are translocated across the cytoplasmic membrane), and thus conserves the redox energy in a proton gradient. The sequence is that of NADH-quinone oxidoreductase subunit K from Paraburkholderia phymatum (strain DSM 17167 / CIP 108236 / LMG 21445 / STM815) (Burkholderia phymatum).